Consider the following 24-residue polypeptide: LFGFLIPLLPHLIGAIPQVIGAIR.

In terms of assembly, exists as aggregates of 3-4 molecules. Expressed by the skin glands.

The protein localises to the secreted. Functionally, thanks to its abundant amphiphilic alpha-helices, it may integrate into membrane phospholipids, leading to lysis of the membrane. Its hemolytic activity is inhibited by phospholipids, but not by cholesterol. Has antibacterial activity with a broad spectrum against various species of bacteria including both Gram-positive and Gram-negative groups. Also has ichthyotoxic activity. The sequence is that of Grammistin Pp 4b from Pogonoperca punctata (Clown grouper).